Consider the following 192-residue polypeptide: Xanthine phosphoribosyltransferase (192 aa).

Positions 20 and 27 each coordinate xanthine. 128 to 132 (AHGEA) serves as a coordination point for 5-phospho-alpha-D-ribose 1-diphosphate. K156 provides a ligand contact to xanthine.

It belongs to the purine/pyrimidine phosphoribosyltransferase family. Xpt subfamily. In terms of assembly, homodimer.

The protein resides in the cytoplasm. It carries out the reaction XMP + diphosphate = xanthine + 5-phospho-alpha-D-ribose 1-diphosphate. It participates in purine metabolism; XMP biosynthesis via salvage pathway; XMP from xanthine: step 1/1. Its function is as follows. Converts the preformed base xanthine, a product of nucleic acid breakdown, to xanthosine 5'-monophosphate (XMP), so it can be reused for RNA or DNA synthesis. This is Xanthine phosphoribosyltransferase from Lactobacillus acidophilus (strain ATCC 700396 / NCK56 / N2 / NCFM).